The chain runs to 379 residues: NADH-quinone oxidoreductase subunit D 2 (379 aa).

This sequence belongs to the complex I 49 kDa subunit family. As to quaternary structure, NDH-1 is composed of 14 different subunits. Subunits NuoB, C, D, E, F, and G constitute the peripheral sector of the complex.

The protein resides in the cell inner membrane. The enzyme catalyses a quinone + NADH + 5 H(+)(in) = a quinol + NAD(+) + 4 H(+)(out). Its function is as follows. NDH-1 shuttles electrons from NADH, via FMN and iron-sulfur (Fe-S) centers, to quinones in the respiratory chain. The immediate electron acceptor for the enzyme in this species is believed to be ubiquinone. Couples the redox reaction to proton translocation (for every two electrons transferred, four hydrogen ions are translocated across the cytoplasmic membrane), and thus conserves the redox energy in a proton gradient. The chain is NADH-quinone oxidoreductase subunit D 2 from Anaeromyxobacter dehalogenans (strain 2CP-C).